A 568-amino-acid polypeptide reads, in one-letter code: Serine/threonine-protein kinase WNK2 (568 aa).

One can recognise a Protein kinase domain in the interval 24-281 (GRYDEILGKG…ALELLQDPFL (258 aa)). Residues 104–107 (TELF) and Lys-154 contribute to the ATP site. The Proton acceptor role is filled by Asp-171. The tract at residues 453 to 473 (SSGEKSHHNHHEFDSSEDKSC) is disordered. The segment covering 463 to 472 (HEFDSSEDKS) has biased composition (basic and acidic residues).

The protein belongs to the protein kinase superfamily. Ser/Thr protein kinase family. WNK subfamily. Autophosphorylated.

The enzyme catalyses L-seryl-[protein] + ATP = O-phospho-L-seryl-[protein] + ADP + H(+). It catalyses the reaction L-threonyl-[protein] + ATP = O-phospho-L-threonyl-[protein] + ADP + H(+). Functionally, regulates flowering time by modulating the photoperiod pathway. Possesses kinase activity in vitro. This is Serine/threonine-protein kinase WNK2 (WNK2) from Arabidopsis thaliana (Mouse-ear cress).